The sequence spans 223 residues: Uridylate kinase (223 aa).

ATP is bound at residue 9-10; the sequence is GS. Gly-43 lines the UMP pocket. 2 residues coordinate ATP: Gly-44 and Arg-48. UMP is bound by residues Asp-65 and 112–118; that span reads THPGHTT. The ATP site is built by Thr-137, Asn-138, Tyr-143, and Asp-146.

The protein belongs to the UMP kinase family. In terms of assembly, homohexamer.

The protein resides in the cytoplasm. The enzyme catalyses UMP + ATP = UDP + ADP. It functions in the pathway pyrimidine metabolism; CTP biosynthesis via de novo pathway; UDP from UMP (UMPK route): step 1/1. Inhibited by UTP. In terms of biological role, catalyzes the reversible phosphorylation of UMP to UDP. The sequence is that of Uridylate kinase from Methanopyrus kandleri (strain AV19 / DSM 6324 / JCM 9639 / NBRC 100938).